The following is a 165-amino-acid chain: Probable bacterial non-heme ferritin-like protein (165 aa).

The Ferritin-like diiron domain occupies methionine 1 to glycine 145. Glutamate 17, glutamate 50, histidine 53, glutamate 94, and glutamine 127 together coordinate Fe cation.

It belongs to the ferritin family. Prokaryotic subfamily.

It localises to the cytoplasm. This is Probable bacterial non-heme ferritin-like protein (ftnB) from Haemophilus influenzae (strain ATCC 51907 / DSM 11121 / KW20 / Rd).